We begin with the raw amino-acid sequence, 210 residues long: Chaperone protein TorD (210 aa).

The protein belongs to the TorD/DmsD family. TorD subfamily.

Its subcellular location is the cytoplasm. Its function is as follows. Involved in the biogenesis of TorA. Acts on TorA before the insertion of the molybdenum cofactor and, as a result, probably favors a conformation of the apoenzyme that is competent for acquiring the cofactor. The protein is Chaperone protein TorD of Salmonella choleraesuis (strain SC-B67).